A 376-amino-acid chain; its full sequence is Heme chaperone HemW (376 aa).

One can recognise a Radical SAM core domain in the interval 1-236 (MFKLPPISLY…LKQSGYKKYE (236 aa)). Y10 provides a ligand contact to S-adenosyl-L-methionine. Positions 16, 20, and 23 each coordinate [4Fe-4S] cluster. Residues G66, 67 to 68 (GT), E99, Q126, R138, and D162 contribute to the S-adenosyl-L-methionine site.

This sequence belongs to the anaerobic coproporphyrinogen-III oxidase family. HemW subfamily. Requires [4Fe-4S] cluster as cofactor.

The protein localises to the cytoplasm. Functionally, probably acts as a heme chaperone, transferring heme to an unknown acceptor. Binds one molecule of heme per monomer, possibly covalently. Binds 1 [4Fe-4S] cluster. The cluster is coordinated with 3 cysteines and an exchangeable S-adenosyl-L-methionine. This Buchnera aphidicola subsp. Schizaphis graminum (strain Sg) protein is Heme chaperone HemW.